We begin with the raw amino-acid sequence, 155 residues long: Probable cyclic pyranopterin monophosphate synthase (155 aa).

Substrate contacts are provided by residues methionine 74–histidine 76 and methionine 110–glutamate 111. Aspartate 125 is an active-site residue.

The protein belongs to the MoaC family. Homohexamer; trimer of dimers.

It carries out the reaction (8S)-3',8-cyclo-7,8-dihydroguanosine 5'-triphosphate = cyclic pyranopterin phosphate + diphosphate. It functions in the pathway cofactor biosynthesis; molybdopterin biosynthesis. In terms of biological role, catalyzes the conversion of (8S)-3',8-cyclo-7,8-dihydroguanosine 5'-triphosphate to cyclic pyranopterin monophosphate (cPMP). The polypeptide is Probable cyclic pyranopterin monophosphate synthase (Methanoregula boonei (strain DSM 21154 / JCM 14090 / 6A8)).